We begin with the raw amino-acid sequence, 452 residues long: Protein CSN12 homolog (452 aa).

Positions 249–446 (VTFKYYEGVL…GFVVLSKSGA (198 aa)) constitute a PCI domain.

Belongs to the CSN12 family.

The chain is Protein CSN12 homolog (csn-8) from Neurospora crassa (strain ATCC 24698 / 74-OR23-1A / CBS 708.71 / DSM 1257 / FGSC 987).